The primary structure comprises 150 residues: MHITILNGPNLNLLGTRQPEVYGATTLADIEHMCQRKAQALGLEIEFNQTNHEGVLIDQIHAARSESDGLIINAGAYTHTSVALMDAVASVSLPTVEVHLSNIHARESFRHTSFLSPVALGLICGFGATGYVMALDGIWAHLTAADSARP.

Catalysis depends on Y22, which acts as the Proton acceptor. Residues N73, H79, and D86 each coordinate substrate. H99 functions as the Proton donor in the catalytic mechanism. Residues 100–101 and R110 each bind substrate; that span reads LS.

Belongs to the type-II 3-dehydroquinase family. As to quaternary structure, homododecamer.

It catalyses the reaction 3-dehydroquinate = 3-dehydroshikimate + H2O. Its pathway is metabolic intermediate biosynthesis; chorismate biosynthesis; chorismate from D-erythrose 4-phosphate and phosphoenolpyruvate: step 3/7. Functionally, catalyzes a trans-dehydration via an enolate intermediate. In Dinoroseobacter shibae (strain DSM 16493 / NCIMB 14021 / DFL 12), this protein is 3-dehydroquinate dehydratase.